Here is a 71-residue protein sequence, read N- to C-terminus: Small ribosomal subunit protein bS18 (71 aa).

The protein belongs to the bacterial ribosomal protein bS18 family. Part of the 30S ribosomal subunit. Forms a tight heterodimer with protein bS6.

Binds as a heterodimer with protein bS6 to the central domain of the 16S rRNA, where it helps stabilize the platform of the 30S subunit. The protein is Small ribosomal subunit protein bS18 of Synechococcus sp. (strain JA-2-3B'a(2-13)) (Cyanobacteria bacterium Yellowstone B-Prime).